Reading from the N-terminus, the 102-residue chain is A-type ATP synthase subunit F (102 aa).

It belongs to the V-ATPase F subunit family. Has multiple subunits with at least A(3), B(3), C, D, E, F, H, I and proteolipid K(x).

It localises to the cell membrane. Component of the A-type ATP synthase that produces ATP from ADP in the presence of a proton gradient across the membrane. The polypeptide is A-type ATP synthase subunit F (Thermococcus gammatolerans (strain DSM 15229 / JCM 11827 / EJ3)).